Reading from the N-terminus, the 242-residue chain is DNA repair protein RecO (242 aa).

Belongs to the RecO family.

In terms of biological role, involved in DNA repair and RecF pathway recombination. This is DNA repair protein RecO from Paracoccus denitrificans (strain Pd 1222).